We begin with the raw amino-acid sequence, 895 residues long: Ras and Rab interactor 2 (895 aa).

The SH2 domain occupies 97–190; that stretch reads WLQLSLSEEE…VLPFTLKLPY (94 aa). Residues 284-361 form a disordered region; it reads LSGGLKRPST…KPTPIPPPRL (78 aa). Pro residues predominate over residues 306 to 315; sequence SPPPRPPPPA. A compositionally biased stretch (polar residues) spans 328–338; that stretch reads TETQTSMPETV. Phosphoserine is present on S366. 2 disordered regions span residues 373–442 and 460–481; these read GAKT…SDSL and SLED…KSKK. The segment covering 430–441 has biased composition (low complexity); the sequence is SDMSISTSSSDS. Residue S501 is modified to Phosphoserine. T509 is subject to Phosphothreonine. Residues 618 to 757 form the VPS9 domain; the sequence is DGSWKQLKEN…IKNFQEEQAA (140 aa). The Ras-associating domain maps to 787–878; the sequence is FQNYLRVAFQ…FHFVYKRIKN (92 aa).

The protein belongs to the RIN (Ras interaction/interference) family. In terms of assembly, homotetramer; probably composed of anti-parallel linkage of two parallel dimers. Interacts with Ras. Interacts with RAB5B, with a much higher affinity for GTP-bound activated RAB5B. Does not interact with other members of the Rab family. As to expression, widely expressed. Expressed in heart, kidney, lung placenta. Expressed at low level in skeletal muscle, spleen and peripheral blood.

The protein localises to the cytoplasm. Functionally, ras effector protein. May function as an upstream activator and/or downstream effector for RAB5B in endocytic pathway. May function as a guanine nucleotide exchange (GEF) of RAB5B, required for activating the RAB5 proteins by exchanging bound GDP for free GTP. The polypeptide is Ras and Rab interactor 2 (RIN2) (Homo sapiens (Human)).